The following is a 498-amino-acid chain: ATP synthase subunit alpha 1 (498 aa).

The protein belongs to the ATPase alpha/beta chains family. As to quaternary structure, F-type ATPases have 2 components, CF(1) - the catalytic core - and CF(0) - the membrane proton channel. CF(1) has five subunits: alpha(3), beta(3), gamma(1), delta(1), epsilon(1). CF(0) has three main subunits: a(1), b(2) and c(9-12). The alpha and beta chains form an alternating ring which encloses part of the gamma chain. CF(1) is attached to CF(0) by a central stalk formed by the gamma and epsilon chains, while a peripheral stalk is formed by the delta and b chains.

Its subcellular location is the cell membrane. It carries out the reaction ATP + H2O + 4 H(+)(in) = ADP + phosphate + 5 H(+)(out). In terms of biological role, produces ATP from ADP in the presence of a proton gradient across the membrane. The alpha chain is a regulatory subunit. The protein is ATP synthase subunit alpha 1 of Listeria monocytogenes serovar 1/2a (strain ATCC BAA-679 / EGD-e).